The sequence spans 301 residues: Glycine--tRNA ligase alpha subunit (301 aa).

This sequence belongs to the class-II aminoacyl-tRNA synthetase family. In terms of assembly, tetramer of two alpha and two beta subunits.

The protein localises to the cytoplasm. It catalyses the reaction tRNA(Gly) + glycine + ATP = glycyl-tRNA(Gly) + AMP + diphosphate. In Shewanella halifaxensis (strain HAW-EB4), this protein is Glycine--tRNA ligase alpha subunit.